Reading from the N-terminus, the 105-residue chain is Urease subunit beta (105 aa).

It belongs to the urease beta subunit family. Heterotrimer of UreA (gamma), UreB (beta) and UreC (alpha) subunits. Three heterotrimers associate to form the active enzyme.

It is found in the cytoplasm. It catalyses the reaction urea + 2 H2O + H(+) = hydrogencarbonate + 2 NH4(+). The protein operates within nitrogen metabolism; urea degradation; CO(2) and NH(3) from urea (urease route): step 1/1. This chain is Urease subunit beta, found in Prochlorococcus marinus (strain MIT 9313).